The sequence spans 204 residues: Ras-related protein R-Ras2 (204 aa).

Ala-2 carries the N-acetylalanine modification. Position 21-29 (21-29 (GGGGVGKSA)) interacts with GTP. Residues 43–51 (YDPTIEDSY) carry the Effector region motif. Residues 68 to 72 (DTAGQ), 127 to 130 (NKAD), and 157 to 159 (SAK) each bind GTP. Residue Ser-186 is modified to Phosphoserine. N6-palmitoyl lysine attachment occurs at residues Lys-192, Lys-194, Lys-196, and Lys-197. Cys-199 carries S-palmitoyl cysteine lipidation. Cys-201 carries the cysteine methyl ester modification. Cys-201 carries S-farnesyl cysteine lipidation. The propeptide at 202 to 204 (VIF) is removed in mature form.

Belongs to the small GTPase superfamily. Ras family. Interacts with RASSF5. In terms of processing, may be post-translationally modified by both palmitoylation and polyisoprenylation. Post-translationally, fatty-acylation at Lys-192, Lys-194; lys-196 and Lys-197 is required for localization to the plasma membrane and activity. Defatty-acylated by SIRT6, affecting its localization to the plasma membrane. As to expression, ubiquitously present in all tissues examined, with the highest levels in heart, placenta, and skeletal muscle. Moderate levels in lung and liver; low levels in brain, kidney, and pancreas.

The protein resides in the cell membrane. It localises to the golgi apparatus membrane. The catalysed reaction is GTP + H2O = GDP + phosphate + H(+). In terms of biological role, GTP-binding protein with GTPase activity, involved in the regulation of MAPK signaling pathway and thereby controlling multiple cellular processes. Regulates craniofacial development. The polypeptide is Ras-related protein R-Ras2 (Homo sapiens (Human)).